An 825-amino-acid chain; its full sequence is Neuroligin-3 (825 aa).

The signal sequence occupies residues 1–34 (MWLQPSLSLSPTPTVGRSLCLTLGFLSLVLRAST). Residues 35–686 (QAPAPTVNTH…NPRDYSTELS (652 aa)) are Extracellular-facing. A glycan (N-linked (GlcNAc...) asparagine) is linked at asparagine 95. Residues cysteine 103 and cysteine 138 are joined by a disulfide bond. Residues 151-172 (SGAKKQGEDLADNDGDEDEDIR) are disordered. Residues 159–171 (DLADNDGDEDEDI) are compositionally biased toward acidic residues. 2 disulfides stabilise this stretch: cysteine 317–cysteine 328 and cysteine 487–cysteine 521. An N-linked (GlcNAc...) asparagine glycan is attached at asparagine 522. 2 stretches are compositionally biased toward polar residues: residues 622 to 633 (TKVPPPDTTHSS) and 654 to 666 (AYSN…SWNG). The tract at residues 622–668 (TKVPPPDTTHSSHITRRPNGKTWSTKRPAISPAYSNENAPGSWNGDQ) is disordered. The chain crosses the membrane as a helical span at residues 687–707 (VTIAVGASLLFLNVLAFAALY). At 708 to 825 (YRKDKRRQEP…LPHSHSTTRV (118 aa)) the chain is on the cytoplasmic side. Serine 722 is subject to Phosphoserine. Phosphotyrosine is present on tyrosine 769.

It belongs to the type-B carboxylesterase/lipase family. As to quaternary structure, homodimer, and heterodimer with NLGN1 and NLGN2. Interacts with neurexins NRXN1, NRXN2 and NRXN3. Interaction with neurexins is mediated by heparan sulfate glycan modification on neurexin. Interacts (via its C-terminus) with DLG4/PSD-95 (via PDZ domain 3). In terms of tissue distribution, brain and arteries (at protein level). Detected in heart, brain, spleen, lung, liver, skeletal muscle, kidney and testis. Expressed in olfactory bulb and olfactory epithelium. Found in olfactory ensheathing glia but not in olfactory neurons, and in developing peripheral glia.

Its subcellular location is the cell membrane. The protein localises to the synapse. Its function is as follows. Cell surface protein involved in cell-cell-interactions via its interactions with neurexin family members. Plays a role in synapse function and synaptic signal transmission, and probably mediates its effects by recruiting and clustering other synaptic proteins. May promote the initial formation of synapses, but is not essential for this. May also play a role in glia-glia or glia-neuron interactions in the developing peripheral nervous system. The chain is Neuroligin-3 (Nlgn3) from Mus musculus (Mouse).